Here is a 540-residue protein sequence, read N- to C-terminus: MAAKDVKFGNDARVKMLRGVNVLADAVKVTLGPKGRNVVLDKSFGAPTITKDGVSVAREIELEDKFENMGAQMVKEVASKANDAAGDGTTTATVLAQSIITEGLKAVAAGMNPMDLKRGIDQAVIAAVDELKKLSVPCSDSKAIAQVGTISANSDATVGELIAQAMEKVGKEGVITVEEGTGLQDELDVVEGMQFDRGYLSPYFINKPETGAVELESPFILLADKKISNIREMLPVLEAVAKAGKPLLIIAEDVEGEALATLVVNTMRGIVKVAAVKAPGFGDRRKAMLQDIAVLTGGTVISEEIGMELEKAGLEDMGQAKRVVINKDTTIIIDGTGEEATINGRVTQIRQQIEEATSDYDREKLQERVAKLAGGVAVLKVGAATEVEMKEKKARVEDALHATRAAVEEGVVAGGGVALVRVASKLAELRGQNEDQNVGIKVALRAMESPLRQIVSNAGEEPSVVTNNVKAGEGNYGYNAQTEEYGDMIDFGILDPTKVTRSALQYAASVAGLMITTECMVTDLPKGDAPDLGAGGGMGG.

Residues threonine 30 to proline 33, lysine 51, aspartate 87 to threonine 91, glycine 415, and aspartate 495 each bind ATP.

Belongs to the chaperonin (HSP60) family. In terms of assembly, forms a cylinder of 14 subunits composed of two heptameric rings stacked back-to-back. Interacts with the co-chaperonin GroES.

It is found in the cytoplasm. It catalyses the reaction ATP + H2O + a folded polypeptide = ADP + phosphate + an unfolded polypeptide.. Functionally, together with its co-chaperonin GroES, plays an essential role in assisting protein folding. The GroEL-GroES system forms a nano-cage that allows encapsulation of the non-native substrate proteins and provides a physical environment optimized to promote and accelerate protein folding. The sequence is that of Chaperonin GroEL from Erwinia aphidicola.